The primary structure comprises 473 residues: Dol-P-Glc:Glc(2)Man(9)GlcNAc(2)-PP-Dol alpha-1,2-glucosyltransferase (473 aa).

The Cytoplasmic portion of the chain corresponds to methionine 1–glycine 6. The chain crosses the membrane as a helical span at residues tyrosine 7–phenylalanine 27. Over serine 28–threonine 64 the chain is Extracellular. The helical transmembrane segment at leucine 65–tryptophan 85 threads the bilayer. Residues serine 86 to arginine 97 lie on the Cytoplasmic side of the membrane. A helical transmembrane segment spans residues phenylalanine 98 to valine 118. Residues glutamine 119 to serine 126 are Extracellular-facing. A helical membrane pass occupies residues serine 127 to asparagine 147. At phenylalanine 148 to tyrosine 150 the chain is on the cytoplasmic side. The helical transmembrane segment at tyrosine 151 to asparagine 171 threads the bilayer. Topologically, residues histidine 172–serine 175 are extracellular. A helical transmembrane segment spans residues alanine 176–cysteine 196. Over alanine 197–proline 256 the chain is Cytoplasmic. The helical transmembrane segment at tyrosine 257–glycine 277 threads the bilayer. Over aspartate 278–glutamate 283 the chain is Extracellular. A helical membrane pass occupies residues alanine 284 to proline 304. The Cytoplasmic portion of the chain corresponds to histidine 305–serine 317. The helical transmembrane segment at leucine 318–tryptophan 338 threads the bilayer. The Extracellular portion of the chain corresponds to lysine 339–arginine 365. The chain crosses the membrane as a helical span at residues tyrosine 366–aspartate 386. Residues serine 387 to proline 392 lie on the Cytoplasmic side of the membrane. The chain crosses the membrane as a helical span at residues isoleucine 393–leucine 413. Residues glutamate 414–arginine 436 are Extracellular-facing. Residues leucine 437–asparagine 457 form a helical membrane-spanning segment. The Cytoplasmic portion of the chain corresponds to lysine 458–tryptophan 473.

This sequence belongs to the ALG10 glucosyltransferase family. In terms of assembly, interacts with KCNH1; may regulate KCNH1, possibly by regulating its N-glycosylation. Interacts with KCNH2; may reduce KCNH2 sensitivity to classic proarrhythmic drug blockade, possibly by regulating its N-glycosylation. Highly expressed in heart, placenta, liver, kidney and pancreas. Weakly expressed in lung, skeletal muscle and brain.

Its subcellular location is the endoplasmic reticulum membrane. It catalyses the reaction an alpha-D-Glc-(1-&gt;3)-alpha-D-Glc-(1-&gt;3)-alpha-D-Man-(1-&gt;2)-alpha-D-Man-(1-&gt;2)-alpha-D-Man-(1-&gt;3)-[alpha-D-Man-(1-&gt;2)-alpha-D-Man-(1-&gt;3)-[alpha-D-Man-(1-&gt;2)-alpha-D-Man-(1-&gt;6)]-alpha-D-Man-(1-&gt;6)]-beta-D-Man-(1-&gt;4)-beta-D-GlcNAc-(1-&gt;4)-alpha-D-GlcNAc-diphospho-di-trans,poly-cis-dolichol + a di-trans,poly-cis-dolichyl beta-D-glucosyl phosphate = a alpha-D-Glc-(1-&gt;2)-alpha-D-Glc-(1-&gt;3)-alpha-D-Glc-(1-&gt;3)-alpha-D-Man-(1-&gt;2)-alpha-D-Man-(1-&gt;2)-alpha-D-Man-(1-&gt;3)-[alpha-D-Man-(1-&gt;2)-alpha-D-Man-(1-&gt;3)-[alpha-D-Man-(1-&gt;2)-alpha-D-Man-(1-&gt;6)]-alpha-D-Man-(1-&gt;6)]-beta-D-Man-(1-&gt;4)-beta-D-GlcNAc-(1-&gt;4)-alpha-D-GlcNAc-diphospho-di-trans,poly-cis-dolichol + a di-trans,poly-cis-dolichyl phosphate + H(+). It functions in the pathway protein modification; protein glycosylation. Dol-P-Glc:Glc(2)Man(9)GlcNAc(2)-PP-Dol alpha-1,2-glucosyltransferase that operates in the biosynthetic pathway of dolichol-linked oligosaccharides, the glycan precursors employed in protein asparagine (N)-glycosylation. The assembly of dolichol-linked oligosaccharides begins on the cytosolic side of the endoplasmic reticulum membrane and finishes in its lumen. The sequential addition of sugars to dolichol pyrophosphate produces dolichol-linked oligosaccharides containing fourteen sugars, including two GlcNAcs, nine mannoses and three glucoses. Once assembled, the oligosaccharide is transferred from the lipid to nascent proteins by oligosaccharyltransferases. In the lumen of the endoplasmic reticulum, adds the third and last glucose residue from dolichyl phosphate glucose (Dol-P-Glc) onto the lipid-linked oligosaccharide intermediate Glc(2)Man(9)GlcNAc(2)-PP-Dol to produce Glc(3)Man(9)GlcNAc(2)-PP-Dol. This chain is Dol-P-Glc:Glc(2)Man(9)GlcNAc(2)-PP-Dol alpha-1,2-glucosyltransferase, found in Homo sapiens (Human).